We begin with the raw amino-acid sequence, 1941 residues long: Myosin-7B (1941 aa).

Positions 30-80 (DGKKRVWVPDEQDAYVEAEVKTEATGGKVTVETKDQKVLTVRETEMQPMNP) constitute a Myosin N-terminal SH3-like domain. A Myosin motor domain is found at 84–785 (DLLEDMAMMT…LLGILEELRD (702 aa)). Position 177–184 (177–184 (GESGAGKT)) interacts with ATP. Actin-binding stretches follow at residues 662 to 684 (LNKL…VPNE) and 764 to 778 (QFGH…GLLG). The region spanning 788 to 817 (LAKVLTLLQARSRGRLMRLEYQRMLGGRDA) is the IQ domain. A coiled-coil region spans residues 846-1935 (LLRSAQAEEE…KLRARSRDAL (1090 aa)). Residues 1887–1941 (RQFEEAEQQASTNLAKYRKAQHELDDAEERADMAETQANKLRARSRDALGPKHKE) are disordered. Residues 1930–1941 (RSRDALGPKHKE) are compositionally biased toward basic and acidic residues.

Belongs to the TRAFAC class myosin-kinesin ATPase superfamily. Myosin family. In terms of assembly, muscle myosin is a hexameric protein that consists of 2 heavy chain subunits (MHC), 2 alkali light chain subunits (MLC) and 2 regulatory light chain subunits (MLC-2).

Its subcellular location is the membrane. In terms of biological role, involved in muscle contraction. This is Myosin-7B (Myh7b) from Mus musculus (Mouse).